Here is a 367-residue protein sequence, read N- to C-terminus: Apolipoprotein A-V (367 aa).

The first 20 residues, 1–20 (MVAVLTWALALLSAFATVQT), serve as a signal peptide directing secretion. Phosphoserine is present on Ser56. The tract at residues 71–90 (LGPLSGQGREPPGLPHDPEG) is disordered.

The protein belongs to the apolipoprotein A1/A4/E family. As to quaternary structure, interacts with GPIHBP1. Interacts with SORL1; this interaction leads to APOA5 internalization and sorting either to lysosomes and degradation, or to the trans-Golgi network. Post-translationally, phosphorylated by FAM20C in the extracellular medium.

Its subcellular location is the secreted. The protein resides in the early endosome. It is found in the late endosome. It localises to the golgi apparatus. The protein localises to the trans-Golgi network. Functionally, minor apolipoprotein mainly associated with HDL and to a lesser extent with VLDL. May also be associated with chylomicrons. Important determinant of plasma triglyceride (TG) levels by both being a potent stimulator of apo-CII lipoprotein lipase (LPL) TG hydrolysis and an inhibitor of the hepatic VLDL-TG production rate (without affecting the VLDL-apoB production rate). Activates poorly lecithin:cholesterol acyltransferase (LCAT) and does not enhance efflux of cholesterol from macrophages. Binds heparin. This is Apolipoprotein A-V (APOA5) from Leptonychotes weddellii (Weddell seal).